The following is a 274-amino-acid chain: MLSVAARSGPFAPVLSATSRGVAGALRPLVQATVPATPEXPVLDLKRPXLSRESLSGQAVRRPLVASVGLNVPASVCYSHTDVKVPDFYDYRRLEVLDSTKSSRESSEARKGFSYLVTAVTTVGVAYAAKNVVTQFISSMSASADVLAMAKIEINLSDIPEGKNMAFKWRGKPLFVRHRTQKEIEEEAAVELSQLRDPQHDLDRVKKPEWVILIGVCTHLGCVPIANAGDFGGYYCPCHGSHYDASGRIRLGPAPLNLEVPPYEFTGDDVVVVG.

The Mitochondrial matrix segment spans residues 79 to 103 (SHTDVKVPDFYDYRRLEVLDSTKSS). Residues 104-140 (RESSEARKGFSYLVTAVTTVGVAYAAKNVVTQFISSM) traverse the membrane as a helical segment. The Mitochondrial intermembrane segment spans residues 141–274 (SASADVLAMA…FTGDDVVVVG (134 aa)). The region spanning 187 to 272 (EAAVELSQLR…YEFTGDDVVV (86 aa)) is the Rieske domain. Positions 217, 219, 236, 239, and 241 each coordinate [2Fe-2S] cluster. Residues C222 and C238 are joined by a disulfide bond.

This sequence belongs to the Rieske iron-sulfur protein family. As to quaternary structure, component of the ubiquinol-cytochrome c oxidoreductase (cytochrome b-c1 complex, complex III, CIII), a multisubunit enzyme composed of 11 subunits. The complex is composed of 3 respiratory subunits cytochrome b, cytochrome c1 and Rieske protein UQCRFS1, 2 core protein subunits UQCRC1/QCR1 and UQCRC2/QCR2, and 6 low-molecular weight protein subunits UQCRH/QCR6, UQCRB/QCR7, UQCRQ/QCR8, UQCR10/QCR9, UQCR11/QCR10 and subunit 9, the cleavage product of Rieske protein UQCRFS1. The complex exists as an obligatory dimer and forms supercomplexes (SCs) in the inner mitochondrial membrane with NADH-ubiquinone oxidoreductase (complex I, CI) and cytochrome c oxidase (complex IV, CIV), resulting in different assemblies (supercomplex SCI(1)III(2)IV(1) and megacomplex MCI(2)III(2)IV(2)). Incorporation of the Rieske protein UQCRFS1 is the penultimate step in complex III assembly. Interacts with TTC19, which is involved in the clearance of UQCRFS1 fragments. Component of the ubiquinol-cytochrome c oxidoreductase (cytochrome b-c1 complex, complex III, CIII). Subunit 9 corresponds to the mitochondrial targeting sequence (MTS) of Rieske protein UQCRFS1. It is retained after processing and incorporated inside complex III, where it remains bound to the complex and localizes between the 2 core subunits UQCRC1/QCR1 and UQCRC2/QCR2. Requires [2Fe-2S] cluster as cofactor. Post-translationally, proteolytic processing is necessary for the correct insertion of UQCRFS1 in the complex III dimer. Several fragments are generated during UQCRFS1 insertion, most probably due to the endogenous matrix-processing peptidase (MPP) activity of the 2 core protein subunits UQCRC1/QCR1 and UQCRC2/QCR2, which are homologous to the 2 mitochondrial-processing peptidase (MPP) subunits beta-MPP and alpha-MPP respectively. The action of the protease is also necessary for the clearance of the UQCRFS1 fragments.

The protein resides in the mitochondrion inner membrane. It carries out the reaction a quinol + 2 Fe(III)-[cytochrome c](out) = a quinone + 2 Fe(II)-[cytochrome c](out) + 2 H(+)(out). Component of the ubiquinol-cytochrome c oxidoreductase, a multisubunit transmembrane complex that is part of the mitochondrial electron transport chain which drives oxidative phosphorylation. The respiratory chain contains 3 multisubunit complexes succinate dehydrogenase (complex II, CII), ubiquinol-cytochrome c oxidoreductase (cytochrome b-c1 complex, complex III, CIII) and cytochrome c oxidase (complex IV, CIV), that cooperate to transfer electrons derived from NADH and succinate to molecular oxygen, creating an electrochemical gradient over the inner membrane that drives transmembrane transport and the ATP synthase. The cytochrome b-c1 complex catalyzes electron transfer from ubiquinol to cytochrome c, linking this redox reaction to translocation of protons across the mitochondrial inner membrane, with protons being carried across the membrane as hydrogens on the quinol. In the process called Q cycle, 2 protons are consumed from the matrix, 4 protons are released into the intermembrane space and 2 electrons are passed to cytochrome c. The Rieske protein is a catalytic core subunit containing a [2Fe-2S] iron-sulfur cluster. It cycles between 2 conformational states during catalysis to transfer electrons from the quinol bound in the Q(0) site in cytochrome b to cytochrome c1. Incorporation of UQCRFS1 is the penultimate step in complex III assembly. Functionally, component of the ubiquinol-cytochrome c oxidoreductase (cytochrome b-c1 complex, complex III, CIII). UQCRFS1 undergoes proteolytic processing once it is incorporated in the complex III dimer. One of the fragments, called subunit 9, corresponds to its mitochondrial targeting sequence (MTS). The proteolytic processing is necessary for the correct insertion of UQCRFS1 in the complex III dimer, but the persistence of UQCRFS1-derived fragments may prevent newly imported UQCRFS1 to be processed and assembled into complex III and is detrimental for the complex III structure and function. The protein is Cytochrome b-c1 complex subunit Rieske, mitochondrial (UQCRFS1) of Chlorocebus aethiops (Green monkey).